The following is an 89-amino-acid chain: Inner kinetochore subunit mhf2 (89 aa).

Belongs to the CENP-X/MHF2 family. In terms of assembly, the MHF histone-fold complex is a heterotetramer of 2 mhf1-mhf2 heterodimers. Component of the inner kinetochore constitutive centromere-associated network (CCAN) (also known as central kinetochore Sim4 complex in fission yeast), which is composed of at least cnl2, cnp3, cnp20, fta1, fta2, fta3, fta4, fta6, fta7, mal2, mhf1, mhf2, mis6, mis15, mis17, sim4 and wip1.

The protein resides in the nucleus. It is found in the cytoplasm. In terms of biological role, component of a FANCM-MHF complex that promotes gene conversion at blocked replication forks, probably by reversal of the stalled fork. FANCM-MHF promotes non-crossover recombination. The protein is Inner kinetochore subunit mhf2 of Schizosaccharomyces pombe (strain 972 / ATCC 24843) (Fission yeast).